The chain runs to 89 residues: Small ribosomal subunit protein uS17 (89 aa).

This sequence belongs to the universal ribosomal protein uS17 family. As to quaternary structure, part of the 30S ribosomal subunit.

Functionally, one of the primary rRNA binding proteins, it binds specifically to the 5'-end of 16S ribosomal RNA. In Bdellovibrio bacteriovorus (strain ATCC 15356 / DSM 50701 / NCIMB 9529 / HD100), this protein is Small ribosomal subunit protein uS17.